Consider the following 225-residue polypeptide: MNPLAPVLTIDGPSGAGKGTISRIIARRMGWHYLDSGALYRAVGVAASWADIDTSDASALVRCTFDTHVQFVEQGESMRVMVNGTDATDELRLETTGALASAIAAIPEVRAALKERQRAFRELPGLVADGRDMGTVIFKDAPYKVFLTASAEERAERRHKQLKDKGVSVNFDDLLREIMARDARDAQRTVAPLKPADDAVLIDTTGIGIDDVVARVMDLLPVPAA.

12–20 is a binding site for ATP; that stretch reads GPSGAGKGT.

It belongs to the cytidylate kinase family. Type 1 subfamily.

Its subcellular location is the cytoplasm. It catalyses the reaction CMP + ATP = CDP + ADP. It carries out the reaction dCMP + ATP = dCDP + ADP. This is Cytidylate kinase from Stenotrophomonas maltophilia (strain K279a).